The chain runs to 931 residues: Synaptopodin (931 aa).

2 disordered regions span residues 56–78 (EEEGTSKSRVNHGTPPLSRAPAI) and 113–243 (ASVS…MEGY). A Phosphoserine modification is found at S134. Positions 136 to 148 (TEKDLKEAKERSQ) are enriched in basic and acidic residues. Polar residues-rich tracts occupy residues 153-164 (QLTTPPSSNSRG) and 188-200 (PKLSQEALQTGHP). 3 positions are modified to phosphoserine: S202, S222, and S258. Low complexity predominate over residues 214 to 232 (PTSPSKPGSPKHSSSQSPS). The interval 280–420 (GLHLSQNRET…SSSGPPAADL (141 aa)) is disordered. Composition is skewed to polar residues over residues 282-293 (HLSQNRETQQSS) and 309-370 (INQN…NTPS). Residues 373 to 384 (DGQRPVPAEEVR) are compositionally biased toward basic and acidic residues. A phosphoserine mark is found at S490 and S514. 2 disordered regions span residues 542 to 591 (RRPL…KGQV) and 691 to 711 (SPRIQAKPKPKPNQNLSEASG). At T549 the chain carries Phosphothreonine. A PPxY motif motif is present at residues 551–554 (PPTY). Positions 556 to 568 (ETLSTAPVASQVR) are enriched in polar residues. Residue S569 is modified to Phosphoserine. The span at 569-580 (SPPSYSTLYPSS) shows a compositional bias: low complexity. The PPxY motif motif lies at 570–573 (PPSY). S691, S742, S746, and S767 each carry phosphoserine. T771 bears the Phosphothreonine mark. Positions 775 to 918 (SLYHGYLPEN…RPSFSTRNAG (144 aa)) are disordered. Low complexity predominate over residues 816–841 (SSRATSSRASSRTVSPRAASPAKPSS). Position 835 is a phosphoserine (S835). At R850 the chain carries Omega-N-methylarginine. A Phosphoserine modification is found at S856. The segment covering 874–895 (VQDSLQPTAVSPTYSSDISPVS) has biased composition (polar residues).

Belongs to the synaptopodin family. As to quaternary structure, interacts with BAIAP1. Interacts with actin. Interacts (via PPxY motifs) with WWC1 (via WW domains). In terms of processing, O-glycosylated. As to expression, expressed at high levels in brain and at moderate, but still significant levels in the heart, skeletal muscle, lung and kidney. In brain, expressed in the cerebral cortex, hippocampus, olfactory bulb and striatum.

It is found in the cytoplasm. It localises to the cytoskeleton. The protein resides in the cell junction. The protein localises to the tight junction. Its subcellular location is the perikaryon. It is found in the cell projection. It localises to the dendritic spine. The protein resides in the postsynaptic density. The protein localises to the synapse. Its subcellular location is the cytosol. Actin-associated protein that may play a role in modulating actin-based shape and motility of dendritic spines and renal podocyte foot processes. Seems to be essential for the formation of spine apparatuses in spines of telencephalic neurons, which is involved in synaptic plasticity. In Rattus norvegicus (Rat), this protein is Synaptopodin (Synpo).